Reading from the N-terminus, the 184-residue chain is Trypsin/chymotrypsin inhibitor (184 aa).

2 cysteine pairs are disulfide-bonded: C39–C84 and C136–C147.

It belongs to the protease inhibitor I3 (leguminous Kunitz-type inhibitor) family. In terms of assembly, homodimer.

Functionally, inhibits trypsin and alpha-chymotrypsin. This is Trypsin/chymotrypsin inhibitor from Alocasia macrorrhizos (Giant taro).